A 790-amino-acid chain; its full sequence is MRTYRYFLLLFWVGQPYPTFSTPLSKRTSGFPAKKRTLELSGNSKNELSRSKRSWMWNQFFLLEEYTGSDYQYVGKLHSDQDRGDGSLKYILSGDGAGDLFIINENTGDIQATKRLDREEKPVYILRAQAINRKTGRPVEPESEFIIKIHDINDNEPIFTKEVYTATVPEMSDVGTFVVQVTATDADDPTYGNSAKVVYSILQGQPYFSVESETGIIKTALLNMDRENREQYQVVIQAKDMGGQMGGLSGTTTVNITLTDVNDNPPRFPQSTYQFKTPESSPPGTPIGRIKASDADVGENAEIEYSITEGEGLDMFDVITDQETQEGIITVKKLLDFEKKKVYTLKVEASNPHVEPRFLYLGPFKDSATVRIMVEDVDEPPVFSKLAYILQIREDAQINTTIGSVTAQDPDAARNPVKYSVDRHTDMDRIFNIDSGNGSIFTSKLLDRETLLWHNITVIATEINNPKQSSRVPLYIKVLDVNDNPPEFAEFYETFVCEKAKADQLIQTLRAIDKDDPYSGHQFSFSLAPEAASGSNFTIQDNKDNTAGIFTRKNGYNRHEMSTYLLPVVISDNDYPVQSSTGTVTVRVCACDHQGNMQSCHAEALVHPTGLSTGALIAILLCIVTLLVTVVLFAALRRQRKKEPLIISKEDIRDNIVSYNDEGGGEEDTQAFDIGTLRNPEAIEDSKLRRDIVPEALFLPRRTPAARDNTDVRDFINQRLKENDTDPTAPPYDSLATYAYEGAGSVADSLSSLESVTTDGDQDYDYLSDWGPRFKKLADMYGGVDSDKDS.

Residues 1-18 (MRTYRYFLLLFWVGQPYP) form the signal peptide. Residues 19–53 (TFSTPLSKRTSGFPAKKRTLELSGNSKNELSRSKR) constitute a propeptide that is removed on maturation. 5 consecutive Cadherin domains span residues 54–159 (SWMW…EPIF), 160–268 (TKEV…PPRF), 269–383 (PQST…PPVF), 384–486 (SKLA…DNPP), and 487–608 (EFAE…LVHP). Topologically, residues 54–615 (SWMWNQFFLL…VHPTGLSTGA (562 aa)) are extracellular. N255 carries N-linked (GlcNAc...) asparagine glycosylation. The disordered stretch occupies residues 261–291 (VNDNPPRFPQSTYQFKTPESSPPGTPIGRIK). Residues 269–279 (PQSTYQFKTPE) show a composition bias toward polar residues. N-linked (GlcNAc...) asparagine glycans are attached at residues N399, N437, N455, and N536. The chain crosses the membrane as a helical span at residues 616-636 (LIAILLCIVTLLVTVVLFAAL). The Cytoplasmic portion of the chain corresponds to 637-790 (RRQRKKEPLI…YGGVDSDKDS (154 aa)). A phosphoserine mark is found at S786 and S790.

The protein resides in the cell membrane. Its function is as follows. Cadherins are calcium-dependent cell adhesion proteins. They preferentially interact with themselves in a homophilic manner in connecting cells; cadherins may thus contribute to the sorting of heterogeneous cell types. The chain is Cadherin-6 (CDH6) from Bos taurus (Bovine).